The sequence spans 372 residues: tRNA-specific 2-thiouridylase MnmA (372 aa).

ATP-binding positions include 7 to 14 (GLSGGVDS) and methionine 33. Residues 104-106 (NPD) form an interaction with target base in tRNA region. The active-site Nucleophile is cysteine 109. Cysteine 109 and cysteine 202 are joined by a disulfide. Glycine 134 is an ATP binding site. Residues 152–154 (KDQ) are interaction with tRNA. The Cysteine persulfide intermediate role is filled by cysteine 202. Residues 310-311 (RY) form an interaction with tRNA region.

The protein belongs to the MnmA/TRMU family.

It is found in the cytoplasm. It carries out the reaction S-sulfanyl-L-cysteinyl-[protein] + uridine(34) in tRNA + AH2 + ATP = 2-thiouridine(34) in tRNA + L-cysteinyl-[protein] + A + AMP + diphosphate + H(+). Its function is as follows. Catalyzes the 2-thiolation of uridine at the wobble position (U34) of tRNA, leading to the formation of s(2)U34. The sequence is that of tRNA-specific 2-thiouridylase MnmA from Mesomycoplasma hyopneumoniae (strain 232) (Mycoplasma hyopneumoniae).